The chain runs to 143 residues: Transcriptional regulator MraZ (143 aa).

SpoVT-AbrB domains lie at T5–E47 and T76–A119.

Belongs to the MraZ family. As to quaternary structure, forms oligomers.

It is found in the cytoplasm. The protein localises to the nucleoid. This Mycobacterium avium (strain 104) protein is Transcriptional regulator MraZ.